Here is a 175-residue protein sequence, read N- to C-terminus: Transcriptional repressor NrdR (175 aa).

A zinc finger lies at 3 to 34 (CPICQDTNSRVLESRSAESGKSIRRRRECMNC). The ATP-cone domain maps to 49 to 139 (ITIIKRDGKK…VYRKFQGIRD (91 aa)).

The protein belongs to the NrdR family. The cofactor is Zn(2+).

In terms of biological role, negatively regulates transcription of bacterial ribonucleotide reductase nrd genes and operons by binding to NrdR-boxes. The polypeptide is Transcriptional repressor NrdR (Trichodesmium erythraeum (strain IMS101)).